The primary structure comprises 376 residues: Putative E3 ubiquitin-protein ligase XBAT34 (376 aa).

ANK repeat units follow at residues 41-71 and 77-106; these read LGRT…NVNA and NGGT…NPLV. The segment at 325–364 adopts an RING-type zinc-finger fold; that stretch reads CVICVDAPSEAVCVPCGHVAGCISCLKEIENKKMGCPVCR.

It catalyses the reaction S-ubiquitinyl-[E2 ubiquitin-conjugating enzyme]-L-cysteine + [acceptor protein]-L-lysine = [E2 ubiquitin-conjugating enzyme]-L-cysteine + N(6)-ubiquitinyl-[acceptor protein]-L-lysine.. It participates in protein modification; protein ubiquitination. Its function is as follows. No E3 ubiquitin-protein ligase activity observed when associated with the E2 enzyme UBC8 in vitro. The protein is Putative E3 ubiquitin-protein ligase XBAT34 (XBAT34) of Arabidopsis thaliana (Mouse-ear cress).